The primary structure comprises 717 residues: Fatty acid oxidation complex subunit alpha (717 aa).

The interval 1–190 is enoyl-CoA hydratase; sequence MESTSAFNLQ…KAGLVDDVVP (190 aa). Positions 306–717 are 3-hydroxyacyl-CoA dehydrogenase; the sequence is RALHSVGVLG…AGNLQAEMTV (412 aa).

This sequence in the N-terminal section; belongs to the enoyl-CoA hydratase/isomerase family. The protein in the central section; belongs to the 3-hydroxyacyl-CoA dehydrogenase family. Heterotetramer of two alpha chains (FadJ) and two beta chains (FadI).

The protein resides in the cytoplasm. It carries out the reaction a (3S)-3-hydroxyacyl-CoA = a (2E)-enoyl-CoA + H2O. The catalysed reaction is a 4-saturated-(3S)-3-hydroxyacyl-CoA = a (3E)-enoyl-CoA + H2O. It catalyses the reaction a (3S)-3-hydroxyacyl-CoA + NAD(+) = a 3-oxoacyl-CoA + NADH + H(+). The enzyme catalyses (3S)-3-hydroxybutanoyl-CoA = (3R)-3-hydroxybutanoyl-CoA. It participates in lipid metabolism; fatty acid beta-oxidation. Functionally, catalyzes the formation of a hydroxyacyl-CoA by addition of water on enoyl-CoA. Also exhibits 3-hydroxyacyl-CoA epimerase and 3-hydroxyacyl-CoA dehydrogenase activities. The chain is Fatty acid oxidation complex subunit alpha from Cronobacter sakazakii (strain ATCC BAA-894) (Enterobacter sakazakii).